A 228-amino-acid polypeptide reads, in one-letter code: Lipoprotein-releasing system ATP-binding protein LolD 2 (228 aa).

The ABC transporter domain occupies 9 to 228 (RGLERVYKTE…KDGHLELQRV (220 aa)). 42-49 (GPSGSGKS) serves as a coordination point for ATP.

This sequence belongs to the ABC transporter superfamily. Lipoprotein translocase (TC 3.A.1.125) family. The complex is composed of two ATP-binding proteins (LolD) and two transmembrane proteins (LolC and LolE).

It is found in the cell inner membrane. In terms of biological role, part of the ABC transporter complex LolCDE involved in the translocation of mature outer membrane-directed lipoproteins, from the inner membrane to the periplasmic chaperone, LolA. Responsible for the formation of the LolA-lipoprotein complex in an ATP-dependent manner. This is Lipoprotein-releasing system ATP-binding protein LolD 2 from Caulobacter vibrioides (strain ATCC 19089 / CIP 103742 / CB 15) (Caulobacter crescentus).